A 312-amino-acid chain; its full sequence is Signal peptidase I (312 aa).

Residues 7 to 27 (IFLLTSTFFTGILWIIDHILL) traverse the membrane as a helical segment. Topologically, residues 28-63 (IKNYFYNKKKTKNNNTILINKVILENKKCFFRSLSS) are cytoplasmic. The helical transmembrane segment at 64 to 84 (LFPTFFIVFIIRSFIYEPFQI) threads the bilayer. The Extracellular portion of the chain corresponds to 85 to 312 (PSGSMMPTLL…IRIKRIGNIY (228 aa)). Residues Ser-88 and Lys-142 contribute to the active site.

This sequence belongs to the peptidase S26 family.

It is found in the cell membrane. The enzyme catalyses Cleavage of hydrophobic, N-terminal signal or leader sequences from secreted and periplasmic proteins.. This is Signal peptidase I (lepB) from Buchnera aphidicola subsp. Schizaphis graminum (strain Sg).